A 268-amino-acid chain; its full sequence is Tryptophan synthase alpha chain (268 aa).

Active-site proton acceptor residues include glutamate 49 and aspartate 60.

This sequence belongs to the TrpA family. As to quaternary structure, tetramer of two alpha and two beta chains.

The catalysed reaction is (1S,2R)-1-C-(indol-3-yl)glycerol 3-phosphate + L-serine = D-glyceraldehyde 3-phosphate + L-tryptophan + H2O. It functions in the pathway amino-acid biosynthesis; L-tryptophan biosynthesis; L-tryptophan from chorismate: step 5/5. The alpha subunit is responsible for the aldol cleavage of indoleglycerol phosphate to indole and glyceraldehyde 3-phosphate. The polypeptide is Tryptophan synthase alpha chain (Vibrio vulnificus (strain CMCP6)).